Reading from the N-terminus, the 285-residue chain is Pseudouridine-5'-phosphate glycosidase (285 aa).

The Proton donor role is filled by Glu17. Substrate is bound by residues Lys77 and Val97. Mn(2+) is bound at residue Asp126. Substrate is bound at residue 128–130 (SQD). Catalysis depends on Lys147, which acts as the Nucleophile.

This sequence belongs to the pseudouridine-5'-phosphate glycosidase family. As to quaternary structure, homotrimer. It depends on Mn(2+) as a cofactor.

The enzyme catalyses D-ribose 5-phosphate + uracil = psi-UMP + H2O. Its function is as follows. Catalyzes the reversible cleavage of pseudouridine 5'-phosphate (PsiMP) to ribose 5-phosphate and uracil. Functions biologically in the cleavage direction, as part of a pseudouridine degradation pathway. In Thermotoga sp. (strain RQ2), this protein is Pseudouridine-5'-phosphate glycosidase.